We begin with the raw amino-acid sequence, 275 residues long: Glutamate racemase (275 aa).

Substrate contacts are provided by residues 10–11 (DS) and 42–43 (YG). C74 functions as the Proton donor/acceptor in the catalytic mechanism. Substrate is bound at residue 75–76 (NT). The active-site Proton donor/acceptor is the C189. 190–191 (TH) provides a ligand contact to substrate.

Belongs to the aspartate/glutamate racemases family.

The catalysed reaction is L-glutamate = D-glutamate. It functions in the pathway cell wall biogenesis; peptidoglycan biosynthesis. Its function is as follows. Provides the (R)-glutamate required for cell wall biosynthesis. This chain is Glutamate racemase, found in Bartonella tribocorum (strain CIP 105476 / IBS 506).